The chain runs to 356 residues: cGAMP-activated phospholipase (356 aa).

The region spanning 15-206 (LSLNGGGARG…VANNPSYIGL (192 aa)) is the PNPLA domain. Residues 19-24 (GGGARG) carry the GXGXXG motif. Residues 58–62 (GTSIG) carry the GXSXG motif. Ser-60 functions as the Nucleophile in the catalytic mechanism. Asp-193 functions as the Proton acceptor in the catalytic mechanism. Positions 193 to 195 (DGG) match the DGA/G motif.

The protein belongs to the patatin family.

The enzyme catalyses a 1,2-diacyl-sn-glycero-3-phosphocholine + H2O = a 2-acyl-sn-glycero-3-phosphocholine + a fatty acid + H(+). It carries out the reaction 1,2-di-(9Z-octadecenoyl)-sn-glycero-3-phosphoethanolamine + 2 H2O = sn-glycero-3-phosphoethanolamine + 2 (9Z)-octadecenoate + 2 H(+). Its activity is regulated as follows. Phospholipase activity is specifically activated upon 3',3'-cGAMP binding, which is produced by the cognate cyclic nucleotide synthase encoded in the same operon. Effector phospholipase of a CBASS antiviral system. CBASS (cyclic oligonucleotide-based antiphage signaling system) provides immunity against bacteriophages. The CD-NTase protein (DncV) synthesizes cyclic nucleotides in response to infection; these serve as specific second messenger signals. The signals activate a diverse range of effectors, leading to bacterial cell death and thus abortive phage infection. A type II-A(GA) CBASS system. Its function is as follows. Phospholipase that is activated upon binding to the cyclic dinucleotide (CDN) second messenger 3',3'-cyclic GMP-AMP (cGAMP). Degrades phospholipids in the cell membrane. Functionally, protects E.coli against phage infection. When capV and dncV are introduced in E.coli MG1655 there is 1000-fold protection against phage P1; protection against other phage (T2, T4, T5, T6 and lambda-vir) requires the 2 subsequent genes (cap2 and cap3). Upon P1 phage infection the activating molecule is produced between 30 and 40 minutes. Activation leads to bacterial cell lysis and death, which occurs before the phage has finished its replication cycle, thus protecting non-infected bacteria by aborting the phage infection and preventing its propagation. In another paper the capV-dncV-cap2-cap3 operon gives 10(4)-10(5)-fold protection against phages lambda, T2, T4 and T6, about 1000-fold protection against P1 and 10-fold protection against T5. This chain is cGAMP-activated phospholipase, found in Escherichia coli (strain TW11681).